The sequence spans 91 residues: Small ribosomal subunit protein bS16 (91 aa).

It belongs to the bacterial ribosomal protein bS16 family.

The polypeptide is Small ribosomal subunit protein bS16 (Staphylococcus epidermidis (strain ATCC 35984 / DSM 28319 / BCRC 17069 / CCUG 31568 / BM 3577 / RP62A)).